Reading from the N-terminus, the 174-residue chain is ATP synthase subunit delta (174 aa).

This sequence belongs to the ATPase delta chain family. As to quaternary structure, F-type ATPases have 2 components, F(1) - the catalytic core - and F(0) - the membrane proton channel. F(1) has five subunits: alpha(3), beta(3), gamma(1), delta(1), epsilon(1). F(0) has three main subunits: a(1), b(2) and c(10-14). The alpha and beta chains form an alternating ring which encloses part of the gamma chain. F(1) is attached to F(0) by a central stalk formed by the gamma and epsilon chains, while a peripheral stalk is formed by the delta and b chains.

Its subcellular location is the cell inner membrane. Functionally, f(1)F(0) ATP synthase produces ATP from ADP in the presence of a proton or sodium gradient. F-type ATPases consist of two structural domains, F(1) containing the extramembraneous catalytic core and F(0) containing the membrane proton channel, linked together by a central stalk and a peripheral stalk. During catalysis, ATP synthesis in the catalytic domain of F(1) is coupled via a rotary mechanism of the central stalk subunits to proton translocation. Its function is as follows. This protein is part of the stalk that links CF(0) to CF(1). It either transmits conformational changes from CF(0) to CF(1) or is implicated in proton conduction. This is ATP synthase subunit delta from Francisella tularensis subsp. tularensis (strain FSC 198).